The following is a 235-amino-acid chain: uncharacterized protein (235 aa).

2 disordered regions span residues 1-47 and 78-128; these read MSHK…QSTN and QEHH…KQPQ. Positions 20–33 are enriched in polar residues; sequence HPPGQSLSSISWSP. Residues 84–98 are compositionally biased toward low complexity; it reads QQQQQQRQNIRSQNS. Polar residues predominate over residues 106–128; sequence VQESQWTSSASNSSLKKQEKQPQ.

This is an uncharacterized protein from Saccharomyces cerevisiae (strain ATCC 204508 / S288c) (Baker's yeast).